The following is a 169-amino-acid chain: Nucleoside diphosphate kinase 3 (169 aa).

Residues K29, R105, T111, R122, V129, and N132 each coordinate ADP. Catalysis depends on H135, which acts as the Pros-phosphohistidine intermediate.

It belongs to the NDK family. As to quaternary structure, homohexamer. Interacts (via its N-terminal region) with KAT5; this interaction enables recruitment of NME3 at DNA damage sites where it plays a role in the repair of DNA. Found in association with several ciliary nephronophthisis proteins, including NEK8, CEP164, ANKS6. The cofactor is Mg(2+).

Its subcellular location is the mitochondrion outer membrane. The protein localises to the cytoplasm. It localises to the cytoskeleton. The protein resides in the cilium basal body. It carries out the reaction a 2'-deoxyribonucleoside 5'-diphosphate + ATP = a 2'-deoxyribonucleoside 5'-triphosphate + ADP. The enzyme catalyses a ribonucleoside 5'-diphosphate + ATP = a ribonucleoside 5'-triphosphate + ADP. Functionally, catalyzes the phosphorylation of ribonucleosides and deoxyribonucleoside diphosphates, other than ATP, into the corresponding triphosphates with ATP as the major phosphate donor. The ATP gamma phosphate is transferred to the nucleoside diphosphate beta phosphate via a ping-pong mechanism, using a phosphorylated active-site intermediate. Through the catalyzed exchange of gamma-phosphate between di- and triphosphonucleosides participates in regulation of intracellular nucleotide homeostasis. Inhibits granulocyte differentiation. May be required for ciliary function during renal development. In terms of biological role, independently of its kinase activity, facilitates mitochondrial tethering prior to membrane fusion through its direct membrane-binding and hexamerization. Implicated in repair of both single- and double-stranded breaks in DNA through its association with the ribonucleotide reductase complex (RNR complex) via its interaction with the histone acetyltransferase KAT5, this interaction enables recruitment of NME3 at DNA damage sites where it plays a role in the repair of DNA, independently of its kinase activity. The polypeptide is Nucleoside diphosphate kinase 3 (Nme3) (Mus musculus (Mouse)).